The primary structure comprises 265 residues: Cyclin-C (265 aa).

The Cyclin N-terminal domain occupies 48–151 (IQVLGEQLKL…LLENLDCCLI (104 aa)).

Belongs to the cyclin family. Cyclin C subfamily. Component of the Cdk8 module of the Mediator complex.

It localises to the nucleus. Functionally, component of the Mediator complex, a coactivator involved in regulated gene transcription of nearly all RNA polymerase II-dependent genes. Mediator functions as a bridge to convey information from gene-specific regulatory proteins to the basal RNA polymerase II transcription machinery. Mediator is recruited to promoters by direct interactions with regulatory proteins and serves as a scaffold for the assembly of a functional preinitiation complex with RNA polymerase II and the general transcription factors. Binds to and activates cyclin-dependent kinase Cdk8 that phosphorylates the CTD (C-terminal domain) of the large subunit of RNA polymerase II (RNAp II), which may inhibit the formation of a transcription initiation complex. The polypeptide is Cyclin-C (CycC) (Aedes aegypti (Yellowfever mosquito)).